Here is a 942-residue protein sequence, read N- to C-terminus: Protein FAM184B (942 aa).

2 disordered regions span residues 1 to 26 (MASA…RGGS) and 73 to 97 (QEDL…TSED). Coiled coils occupy residues 89–150 (QEQS…RVLI), 196–337 (EMHQ…DRLM), and 387–495 (SETQ…SLLE). The segment at 486 to 542 (STKLQNSLLEDPCSRPKKPARDEGLEKLTDEEESSSDEEERTGESVKGKSDLQPPFE) is disordered. Over residues 504–513 (PARDEGLEKL) the composition is skewed to basic and acidic residues. The span at 514–526 (TDEEESSSDEEER) shows a compositional bias: acidic residues. Coiled-coil stretches lie at residues 575-619 (NKDS…ESLR) and 686-815 (EKGL…ERRF). Residues 880–934 (APPITKSPSLDPSPSCSQPYKPTQLLDGKTASRTQDGEPAQPKEAPQKQGSPHQE) form a disordered region. Residues 885-900 (KSPSLDPSPSCSQPYK) show a composition bias toward polar residues.

It belongs to the FAM184 family.

This chain is Protein FAM184B (Fam184b), found in Mus musculus (Mouse).